Here is a 487-residue protein sequence, read N- to C-terminus: Probable glycine dehydrogenase (decarboxylating) subunit 2 (487 aa).

Lysine 273 carries the post-translational modification N6-(pyridoxal phosphate)lysine.

Belongs to the GcvP family. C-terminal subunit subfamily. As to quaternary structure, the glycine cleavage system is composed of four proteins: P, T, L and H. In this organism, the P 'protein' is a heterodimer of two subunits. Pyridoxal 5'-phosphate serves as cofactor.

The catalysed reaction is N(6)-[(R)-lipoyl]-L-lysyl-[glycine-cleavage complex H protein] + glycine + H(+) = N(6)-[(R)-S(8)-aminomethyldihydrolipoyl]-L-lysyl-[glycine-cleavage complex H protein] + CO2. The glycine cleavage system catalyzes the degradation of glycine. The P protein binds the alpha-amino group of glycine through its pyridoxal phosphate cofactor; CO(2) is released and the remaining methylamine moiety is then transferred to the lipoamide cofactor of the H protein. This chain is Probable glycine dehydrogenase (decarboxylating) subunit 2, found in Lysinibacillus sphaericus (strain C3-41).